The chain runs to 141 residues: Protein X (141 aa).

Over residues 25–48 (SSGPSFPRPAAGSAASSASSPSPS) the composition is skewed to low complexity. Residues 25-52 (SSGPSFPRPAAGSAASSASSPSPSDESD) form a disordered region. The mitochondrial targeting sequence stretch occupies residues 68 to 113 (PCCLVFTCADLRTMDSTVNFVSWHANRQLGMPSKDLWTPYIKDQLL).

The protein belongs to the orthohepadnavirus protein X family. In terms of assembly, may form homodimer. May interact with host CEBPA, CFLAR, CREB1, DDB1, E4F1, HBXIP, HSPD1/HSP60, NFKBIA, POLR2E and SMAD4. Interacts with host SMC5-SMC6 complex and induces its degradation. Interacts with host TRPC4AP; leading to prevent ubiquitination of TRPC4AP. Interacts with host PLSCR1; this interaction promotes ubiquitination and degradation of HBx and impairs HBx-mediated cell proliferation. Post-translationally, a fraction may be phosphorylated in insect cells and HepG2 cells, a human hepatoblastoma cell line. Phosphorylated in vitro by host protein kinase C or mitogen-activated protein kinase. N-acetylated in insect cells.

It localises to the host cytoplasm. It is found in the host nucleus. Its subcellular location is the host mitochondrion. Multifunctional protein that plays a role in silencing host antiviral defenses and promoting viral transcription. Does not seem to be essential for HBV infection. May be directly involved in development of cirrhosis and liver cancer (hepatocellular carcinoma). Most of cytosolic activities involve modulation of cytosolic calcium. The effect on apoptosis is controversial depending on the cell types in which the studies have been conducted. May induce apoptosis by localizing in mitochondria and causing loss of mitochondrial membrane potential. May also modulate apoptosis by binding host CFLAR, a key regulator of the death-inducing signaling complex (DISC). Promotes viral transcription by using the host E3 ubiquitin ligase DDB1 to target the SMC5-SMC6 complex to proteasomal degradation. This host complex would otherwise bind to viral episomal DNA, and prevents its transcription. Moderately stimulates transcription of many different viral and cellular transcription elements. Promoters and enhancers stimulated by HBx contain DNA binding sites for NF-kappa-B, AP-1, AP-2, c-EBP, ATF/CREB, or the calcium-activated factor NF-AT. The protein is Protein X of Marmota monax (Woodchuck).